Consider the following 190-residue polypeptide: MATHHTLWMGLVLLGLLGGLQAAPEAQVSVQPNFQPDKFLGRWFSAGLASNSSWLQEKKAALSMCKSVVAPATDGGLNLTSTFLRKNQCETRTMLLQPGESLGSYSYGSPHWGSTYSVSVVETDYDHYALLYSQGSKGPGEDFRMATLYSRTQTPRAELKEKFSAFCKAQGFTEDSIVFLPQTDKCMTEQ.

A signal peptide spans 1 to 22 (MATHHTLWMGLVLLGLLGGLQA). N51 carries an N-linked (GlcNAc...) asparagine glycan. Catalysis depends on C65, which acts as the Nucleophile. A glycan (N-linked (GlcNAc...) asparagine) is linked at N78. Residues C89 and C186 are joined by a disulfide bond.

It belongs to the calycin superfamily. Lipocalin family. Monomer.

It is found in the rough endoplasmic reticulum. The protein localises to the nucleus membrane. It localises to the golgi apparatus. Its subcellular location is the cytoplasm. The protein resides in the perinuclear region. It is found in the secreted. The catalysed reaction is prostaglandin H2 = prostaglandin D2. Catalyzes the conversion of PGH2 to PGD2, a prostaglandin involved in smooth muscle contraction/relaxation and a potent inhibitor of platelet aggregation. Involved in a variety of CNS functions, such as sedation, NREM sleep and PGE2-induced allodynia, and may have an anti-apoptotic role in oligodendrocytes. Binds small non-substrate lipophilic molecules, including biliverdin, bilirubin, retinal, retinoic acid and thyroid hormone, and may act as a scavenger for harmful hydrophobic molecules and as a secretory retinoid and thyroid hormone transporter. Possibly involved in development and maintenance of the blood-brain, blood-retina, blood-aqueous humor and blood-testis barrier. It is likely to play important roles in both maturation and maintenance of the central nervous system and male reproductive system. Involved in PLA2G3-dependent maturation of mast cells. PLA2G3 is secreted by immature mast cells and acts on nearby fibroblasts upstream to PTDGS to synthesize PGD2, which in turn promotes mast cell maturation and degranulation via PTGDR. The chain is Prostaglandin-H2 D-isomerase (PTGDS) from Macaca fuscata fuscata (Japanese macaque).